The primary structure comprises 424 residues: Glutamyl-tRNA reductase (424 aa).

Substrate-binding positions include 50–53 (TCNR), serine 98, 103–105 (EDQ), and glutamine 109. Cysteine 51 (nucleophile) is an active-site residue. 178 to 183 (GSGEMG) lines the NADP(+) pocket.

Belongs to the glutamyl-tRNA reductase family. In terms of assembly, homodimer.

It carries out the reaction (S)-4-amino-5-oxopentanoate + tRNA(Glu) + NADP(+) = L-glutamyl-tRNA(Glu) + NADPH + H(+). The protein operates within porphyrin-containing compound metabolism; protoporphyrin-IX biosynthesis; 5-aminolevulinate from L-glutamyl-tRNA(Glu): step 1/2. In terms of biological role, catalyzes the NADPH-dependent reduction of glutamyl-tRNA(Glu) to glutamate 1-semialdehyde (GSA). The polypeptide is Glutamyl-tRNA reductase (Methanoregula boonei (strain DSM 21154 / JCM 14090 / 6A8)).